Here is a 336-residue protein sequence, read N- to C-terminus: D-alanine--D-alanine ligase (336 aa).

In terms of domain architecture, ATP-grasp spans 124–330 (KMWFSALGIP…FTQYLSLVIN (207 aa)). 154-209 (ALEKWGSIFVKAASQGSSVGCYKVDEASKVLGVLKDAFGYAPYVIVEKTIKARELE) contributes to the ATP binding site. Positions 284, 297, and 299 each coordinate Mg(2+).

It belongs to the D-alanine--D-alanine ligase family. Requires Mg(2+) as cofactor. Mn(2+) serves as cofactor.

It is found in the cytoplasm. The enzyme catalyses 2 D-alanine + ATP = D-alanyl-D-alanine + ADP + phosphate + H(+). It functions in the pathway cell wall biogenesis; peptidoglycan biosynthesis. Cell wall formation. The protein is D-alanine--D-alanine ligase of Shewanella oneidensis (strain ATCC 700550 / JCM 31522 / CIP 106686 / LMG 19005 / NCIMB 14063 / MR-1).